The sequence spans 286 residues: Plasma membrane ascorbate-dependent reductase CYBRD1 (286 aa).

The Cytoplasmic portion of the chain corresponds to 1 to 7; sequence MAMEGYR. The helical transmembrane segment at 8 to 32 threads the bilayer; it reads GFLGLLVSALLVGFLSVIFVLIWVL. In terms of domain architecture, Cytochrome b561 spans 15–220; sequence SALLVGFLSV…FGALIFWIVT (206 aa). Residues 33 to 47 lie on the Extracellular side of the membrane; the sequence is HFREGLGWDGGALEF. The chain crosses the membrane as a helical span at residues 48 to 69; it reads NWHPVLAVTGFVFIQGIAIIVY. Residues histidine 50, arginine 70, and lysine 79 each coordinate heme b. Residues 70–78 lie on the Cytoplasmic side of the membrane; that stretch reads RLPWTWKCS. L-ascorbate-binding residues include lysine 79 and lysine 83. A helical membrane pass occupies residues 79-105; sequence KFLMKSIHAGLNAVAAILAIISVVAVF. Residue histidine 86 coordinates heme b. At 106 to 118 the chain is on the extracellular side; that stretch reads DYHNVRKIPHMYS. Histidine 108 contributes to the Fe(3+) binding site. Heme b is bound by residues 115–118 and histidine 120; that span reads HMYS. A helical transmembrane segment spans residues 119–144; the sequence is LHSWVGLTVLILYIQQLVVGFFIFLL. At 145 to 151 the chain is on the cytoplasmic side; the sequence is PWAPPSL. Residue arginine 152 coordinates L-ascorbate. Residues 152–179 traverse the membrane as a helical segment; sequence RAIVMPIHVYSGLLLFGTVIATVLMGVT. Residues histidine 159 and glutamate 180 each contribute to the heme b site. Topologically, residues 180–197 are extracellular; that stretch reads EKLFFVLKNPSYHSFPPE. A helical transmembrane segment spans residues 198–222; that stretch reads GVFTNTLGLLILVFGALIFWIVTRP. Residues 223–286 lie on the Cytoplasmic side of the membrane; it reads QWKRPREPGS…LVDTGQRSTM (64 aa). Position 225 (lysine 225) interacts with heme b. Serine 232 carries the post-translational modification Phosphoserine. Threonine 285 carries the phosphothreonine modification.

In terms of assembly, homodimer. Requires heme b as cofactor. As to expression, highly expressed in all regions of the small intestine and colon studied in suckling animals. However, after weaning, when iron absorption declines significantly, strong expression is retained only in the duodenum. Also expressed in respiratory epithelium.

Its subcellular location is the cell membrane. It localises to the apical cell membrane. It carries out the reaction Fe(3+)(out) + L-ascorbate(in) = monodehydro-L-ascorbate radical(in) + Fe(2+)(out) + H(+). It catalyses the reaction Cu(2+)(out) + L-ascorbate(in) = Cu(+)(out) + monodehydro-L-ascorbate radical(in) + H(+). The catalysed reaction is monodehydro-L-ascorbate radical(out) + L-ascorbate(in) = monodehydro-L-ascorbate radical(in) + L-ascorbate(out). Functionally, plasma membrane reductase that uses cytoplasmic ascorbate as an electron donor to reduce extracellular Fe(3+) into Fe(2+). Probably functions in dietary iron absorption at the brush border of duodenal enterocytes by producing Fe(2+), the divalent form of iron that can be transported into enterocytes. It is also able to reduce extracellular monodehydro-L-ascorbate and may be involved in extracellular ascorbate regeneration by erythrocytes in blood. May also act as a ferrireductase in airway epithelial cells. May also function as a cupric transmembrane reductase. In Rattus norvegicus (Rat), this protein is Plasma membrane ascorbate-dependent reductase CYBRD1.